The primary structure comprises 200 residues: Probable DNA-directed RNA polymerase subunit delta (200 aa).

The HTH HARE-type domain maps to 19–88 (LSMIEVARAI…GDNKWGLRSW (70 aa)). 2 stretches are compositionally biased toward acidic residues: residues 125–143 (DSDA…DAYE) and 150–200 (YDDE…TSEE). The tract at residues 125 to 200 (DSDAIDYNAD…SDDDAETSEE (76 aa)) is disordered.

The protein belongs to the RpoE family. RNAP is composed of a core of 2 alpha, a beta and a beta' subunits. The core is associated with a delta subunit and one of several sigma factors.

In terms of biological role, participates in both the initiation and recycling phases of transcription. In the presence of the delta subunit, RNAP displays an increased specificity of transcription, a decreased affinity for nucleic acids, and an increased efficiency of RNA synthesis because of enhanced recycling. This Streptococcus pneumoniae serotype 4 (strain ATCC BAA-334 / TIGR4) protein is Probable DNA-directed RNA polymerase subunit delta.